Here is a 150-residue protein sequence, read N- to C-terminus: Seminal ribonuclease (150 aa).

Residues 1 to 26 (MALKSLVVLPLLVLVLLLVRVQPSLG) form the signal peptide. Substrate contacts are provided by K33 and R36. Residue H38 is the Proton acceptor of the active site. 4 disulfide bridges follow: C52/C110, C66/C121, C84/C136, and C91/C98. Residues 67-71 (KPVNT) and K92 each bind substrate. Residue N93 is modified to Deamidated asparagine; by deterioration. A substrate-binding site is contributed by R111. H145 acts as the Proton donor in catalysis.

Belongs to the pancreatic ribonuclease family. Homodimer; disulfide-linked. In terms of tissue distribution, seminal plasma. Can reach 3% of the protein content of this fluid.

Its subcellular location is the secreted. It carries out the reaction an [RNA] containing cytidine + H2O = an [RNA]-3'-cytidine-3'-phosphate + a 5'-hydroxy-ribonucleotide-3'-[RNA].. The enzyme catalyses an [RNA] containing uridine + H2O = an [RNA]-3'-uridine-3'-phosphate + a 5'-hydroxy-ribonucleotide-3'-[RNA].. Allosteric regulation by both substrate and reaction products. This enzyme hydrolyzes both single- and double-stranded RNA. This is Seminal ribonuclease (SRN) from Bos taurus (Bovine).